The chain runs to 209 residues: Phosphoheptose isomerase (209 aa).

In terms of domain architecture, SIS spans 50-209 (IADTFREGGK…ELVEKMMGYD (160 aa)). 65 to 67 (NGG) is a binding site for substrate. Zn(2+) contacts are provided by histidine 74 and glutamate 78. Substrate-binding positions include glutamate 78, 109–110 (ND), 135–137 (STS), serine 140, and glutamine 188. Residues glutamine 188 and histidine 196 each coordinate Zn(2+).

This sequence belongs to the SIS family. GmhA subfamily. Zn(2+) is required as a cofactor.

Its subcellular location is the cytoplasm. The catalysed reaction is 2 D-sedoheptulose 7-phosphate = D-glycero-alpha-D-manno-heptose 7-phosphate + D-glycero-beta-D-manno-heptose 7-phosphate. It participates in carbohydrate biosynthesis; D-glycero-D-manno-heptose 7-phosphate biosynthesis; D-glycero-alpha-D-manno-heptose 7-phosphate and D-glycero-beta-D-manno-heptose 7-phosphate from sedoheptulose 7-phosphate: step 1/1. Catalyzes the isomerization of sedoheptulose 7-phosphate in D-glycero-D-manno-heptose 7-phosphate. The protein is Phosphoheptose isomerase of Chlorobaculum tepidum (strain ATCC 49652 / DSM 12025 / NBRC 103806 / TLS) (Chlorobium tepidum).